A 345-amino-acid chain; its full sequence is High mobility group protein 20A (345 aa).

Disordered regions lie at residues 1 to 130 (MEST…PFPE) and 166 to 206 (QKYQ…EKES). Composition is skewed to polar residues over residues 22–38 (NNQP…SSQA) and 57–67 (LHQSGEQQLGN). Residues 80-94 (ARRGGWNKGRKRKRS) are compositionally biased toward basic residues. Residues 101-169 (PKAPLTGYVR…RYTKELQKYQ (69 aa)) constitute a DNA-binding region (HMG box). Positions 112 to 125 (MNERREQLRTERPD) are enriched in basic and acidic residues. Positions 167–178 (KYQNTDAYQTYS) are enriched in polar residues. Basic residues predominate over residues 179–189 (RKAKSRQKGRQ). A coiled-coil region spans residues 227-285 (SKAREAELRQLRKSNMEFEERNAALQKHVESMRSAVQRLEAELSQEHERNSLLQQHLQS).

Its subcellular location is the nucleus. In terms of biological role, plays a role in neuronal differentiation. This is High mobility group protein 20A (hmg20a) from Xenopus laevis (African clawed frog).